We begin with the raw amino-acid sequence, 224 residues long: uncharacterized protein (224 aa).

It to M.tuberculosis Rv2558.

This is an uncharacterized protein from Mycobacterium tuberculosis (strain CDC 1551 / Oshkosh).